Here is a 152-residue protein sequence, read N- to C-terminus: Cornifin-A (152 aa).

A disordered region spans residues 20-40 (EVKQPCQPPPQEPCAPKTKEP). Repeat copies occupy residues 27–34 (PPPQEPCA), 35–42 (PKTKEPCH), 43–49 (PIPEPCN), 50–57 (PKVPEPCQ), 58–65 (PKVPEPCQ), 66–73 (PKVPEPCQ), 74–81 (PKVPEPCQ), 82–89 (PKVPEPCQ), 90–97 (PKVPEPCQ), 98–105 (PKVPEPCH), 106–113 (PKAPEPCH), 114–121 (PVVPEPCQ), 122–129 (PVAPEPCQ), and 130–137 (PVVPEPCP). A 14 X 8 AA approximate tandem repeats region spans residues 27-137 (PPPQEPCAPK…CQPVVPEPCP (111 aa)).

This sequence belongs to the cornifin (SPRR) family. In squamous epithelia lining the nasal vestibule and in the hard palate.

It localises to the cytoplasm. Its function is as follows. Cross-linked envelope protein of keratinocytes. It is a keratinocyte protein that first appears in the cell cytosol, but ultimately becomes cross-linked to membrane proteins by transglutaminase. All that results in the formation of an insoluble envelope beneath the plasma membrane. In Rattus norvegicus (Rat), this protein is Cornifin-A (Sprr1a).